A 1057-amino-acid chain; its full sequence is Glycine dehydrogenase (decarboxylating), mitochondrial (1057 aa).

A mitochondrion-targeting transit peptide spans 1-86 (MERARRLANR…GVGYPSQSRS (86 aa)). The span at 18 to 27 (SEAKQNRKTE) shows a compositional bias: basic and acidic residues. The tract at residues 18–47 (SEAKQNRKTESTSTTTTTPLPFSLSGSSSR) is disordered. Residues 28-47 (STSTTTTTPLPFSLSGSSSR) are compositionally biased toward low complexity. An N6-(pyridoxal phosphate)lysine modification is found at Lys792.

Belongs to the GcvP family. In terms of assembly, homodimer. The glycine cleavage system is composed of four proteins: P, T, L and H. Requires pyridoxal 5'-phosphate as cofactor. In terms of tissue distribution, highly expressed in leaves. Detected in roots and embryos.

Its subcellular location is the mitochondrion. It catalyses the reaction N(6)-[(R)-lipoyl]-L-lysyl-[glycine-cleavage complex H protein] + glycine + H(+) = N(6)-[(R)-S(8)-aminomethyldihydrolipoyl]-L-lysyl-[glycine-cleavage complex H protein] + CO2. Functionally, the glycine cleavage system catalyzes the degradation of glycine. The P protein binds the alpha-amino group of glycine through its pyridoxal phosphate cofactor; CO(2) is released and the remaining methylamine moiety is then transferred to the lipoamide cofactor of the H protein. This Pisum sativum (Garden pea) protein is Glycine dehydrogenase (decarboxylating), mitochondrial (GDCSP).